A 698-amino-acid polypeptide reads, in one-letter code: Na(+)/H(+) antiporter NhaS5 (698 aa).

The next 12 helical transmembrane spans lie at 10–30 (SNPLIDFTILLLVTLILPPIF), 35–55 (LPGLVGLLFAGIVLGKSGLGV), 65–85 (LFTDIGKIYLMFVAGLEIDMV), 100–120 (LTFAVPLLTGLAVGLTFGYSF), 121–141 (NASVLLGSLFASHTLLGYPIV), 156–176 (IGATIFTDIAALLVLAICISI), 184–204 (AGLVVQLVAIAVYSALVLIGF), 222–242 (QFLFVLLAVFLASVGSELINV), 275–295 (LFIPFFFIGIGLLLDLPAFLV), 300–320 (LFPLVVAIVVGLILSKGVAAI), 333–353 (GLTMWSLSIPQVAATLAAAVA), and 370–390 (VLNTIIVLMLITSIVGPLMTA).

It belongs to the monovalent cation:proton antiporter 2 (CPA2) transporter (TC 2.A.37) family.

The protein resides in the membrane. Na(+)/H(+) antiporter. This chain is Na(+)/H(+) antiporter NhaS5 (nhaS5), found in Synechocystis sp. (strain ATCC 27184 / PCC 6803 / Kazusa).